The sequence spans 127 residues: MENNPSSKIEVAVSSRFLDQQSNRNEGRYVFAYTIRIYNAGNVPARLIARHWQITDANGKVEYVTGEGVIGEQPRLRPGEEFRYTSGVVLGTEQGQMQGHYDMMADDGTEFTATISPFVLSVPRTLH.

The ApaG domain maps to 3–127 (NNPSSKIEVA…FVLSVPRTLH (125 aa)).

This chain is Protein ApaG, found in Xylella fastidiosa (strain M23).